The primary structure comprises 476 residues: Bifunctional protein HldE (476 aa).

Positions 1-319 are ribokinase; the sequence is MKVSLPAFEK…EALALHHGES (319 aa). Residue 195–198 coordinates ATP; sequence NMSE. Asp-264 is an active-site residue. A cytidylyltransferase region spans residues 345-476; it reads MTNGCFDILH…AIIQNIMAKQ (132 aa).

It in the N-terminal section; belongs to the carbohydrate kinase PfkB family. The protein in the C-terminal section; belongs to the cytidylyltransferase family. In terms of assembly, homodimer.

The enzyme catalyses D-glycero-beta-D-manno-heptose 7-phosphate + ATP = D-glycero-beta-D-manno-heptose 1,7-bisphosphate + ADP + H(+). It carries out the reaction D-glycero-beta-D-manno-heptose 1-phosphate + ATP + H(+) = ADP-D-glycero-beta-D-manno-heptose + diphosphate. It participates in nucleotide-sugar biosynthesis; ADP-L-glycero-beta-D-manno-heptose biosynthesis; ADP-L-glycero-beta-D-manno-heptose from D-glycero-beta-D-manno-heptose 7-phosphate: step 1/4. Its pathway is nucleotide-sugar biosynthesis; ADP-L-glycero-beta-D-manno-heptose biosynthesis; ADP-L-glycero-beta-D-manno-heptose from D-glycero-beta-D-manno-heptose 7-phosphate: step 3/4. Functionally, catalyzes the phosphorylation of D-glycero-D-manno-heptose 7-phosphate at the C-1 position to selectively form D-glycero-beta-D-manno-heptose-1,7-bisphosphate. Its function is as follows. Catalyzes the ADP transfer from ATP to D-glycero-beta-D-manno-heptose 1-phosphate, yielding ADP-D-glycero-beta-D-manno-heptose. The chain is Bifunctional protein HldE from Shewanella sp. (strain MR-4).